The chain runs to 349 residues: Mitomycin biosynthesis 6-O-methyltransferase (349 aa).

S-adenosyl-L-methionine contacts are provided by residues serine 167, glycine 190, 213–214, 240–241, and lysine 255; these read ER and DF. Residue histidine 259 is the Proton acceptor of the active site. Asparagine 288 serves as a coordination point for substrate.

Belongs to the class I-like SAM-binding methyltransferase superfamily. Cation-independent O-methyltransferase family. COMT subfamily. As to quaternary structure, homodimer.

It carries out the reaction 6-demethylmitomycin A + S-adenosyl-L-methionine = mitomycin A + S-adenosyl-L-homocysteine. The enzyme catalyses 6-demethylmitomycin B + S-adenosyl-L-methionine = mitomycin B + S-adenosyl-L-homocysteine. Completely inhibited by Zn(2+) and Cu(2+). In terms of biological role, involved in the biosynthesis of the quinone methoxy group present in the mitomycin A and B, which are used as anticancer agents. In vitro, catalyzes the 6-O-methylation of both C9-beta- and C9-alpha-configured 6-hydroxymitomycins via the transfer of the S-methyl group of S-adenosyl-L-methionine (AdoMet) to the 6-demethylmitomycin A and B. It can also use hydroxyquinone as substrate. This Streptomyces lavendulae protein is Mitomycin biosynthesis 6-O-methyltransferase.